The sequence spans 155 residues: UPF0461 protein C5orf24 homolog (155 aa).

Residues 1–10 show a composition bias toward polar residues; sequence MMHPVASSNP. Residues 1–20 are disordered; the sequence is MMHPVASSNPAFCGPGKPSC. A Phosphoserine modification is found at Ser37. The interval 40–155 is disordered; the sequence is SKYSHTVNHK…QQAFRCSSDA (116 aa). Positions 57-70 are enriched in polar residues; it reads DPLNETHLQTTSGR. Lys75 is covalently cross-linked (Glycyl lysine isopeptide (Lys-Gly) (interchain with G-Cter in SUMO2)). A compositionally biased stretch (basic residues) spans 80 to 92; that stretch reads KKKNLNRSGKRGR. The segment covering 94–107 has biased composition (polar residues); it reads SGTTKSAGYRTSTG. A Phosphoserine modification is found at Ser121.

Belongs to the UPF0461 family.

This is UPF0461 protein C5orf24 homolog from Pongo abelii (Sumatran orangutan).